Reading from the N-terminus, the 585-residue chain is tRNA 5-methylaminomethyl-2-thiouridine biosynthesis bifunctional protein MnmC (585 aa).

The tRNA (mnm(5)s(2)U34)-methyltransferase stretch occupies residues 1 to 236; that stretch reads MTPDGLYCDP…KRERLEAVWP (236 aa). The FAD-dependent cmnm(5)s(2)U34 oxidoreductase stretch occupies residues 254–585; sequence LGAGIAGASL…SRRAGQGAAG (332 aa). The tract at residues 564–585 is disordered; sequence EAMAPGRFAERRSRRAGQGAAG.

It in the N-terminal section; belongs to the methyltransferase superfamily. tRNA (mnm(5)s(2)U34)-methyltransferase family. In the C-terminal section; belongs to the DAO family. Requires FAD as cofactor.

The protein localises to the cytoplasm. It catalyses the reaction 5-aminomethyl-2-thiouridine(34) in tRNA + S-adenosyl-L-methionine = 5-methylaminomethyl-2-thiouridine(34) in tRNA + S-adenosyl-L-homocysteine + H(+). In terms of biological role, catalyzes the last two steps in the biosynthesis of 5-methylaminomethyl-2-thiouridine (mnm(5)s(2)U) at the wobble position (U34) in tRNA. Catalyzes the FAD-dependent demodification of cmnm(5)s(2)U34 to nm(5)s(2)U34, followed by the transfer of a methyl group from S-adenosyl-L-methionine to nm(5)s(2)U34, to form mnm(5)s(2)U34. This chain is tRNA 5-methylaminomethyl-2-thiouridine biosynthesis bifunctional protein MnmC, found in Maricaulis maris (strain MCS10) (Caulobacter maris).